We begin with the raw amino-acid sequence, 998 residues long: UPF0182 protein AAur_2732 (998 aa).

A run of 7 helical transmembrane segments spans residues 18-38 (GALT…IFFA), 64-84 (IITF…AIRI), 115-135 (VVMI…AASQ), 168-188 (FLGF…IAGI), 211-231 (QIHI…NFWL), 260-280 (AILA…AIIG), and 287-307 (IGTA…PWVI). Disordered stretches follow at residues 490–518 (GAPD…TFSG), 888–923 (LFGG…PTDA), and 971–998 (QARL…SPSS). Residues 496 to 509 (PNREQDRPAGREGG) show a composition bias toward basic and acidic residues. The span at 908 to 919 (TSPPGTTPPPAG) shows a compositional bias: pro residues. A compositionally biased stretch (low complexity) spans 976-990 (ATPAPTATPGATPSA).

It belongs to the UPF0182 family.

It is found in the cell membrane. This chain is UPF0182 protein AAur_2732, found in Paenarthrobacter aurescens (strain TC1).